A 143-amino-acid polypeptide reads, in one-letter code: Large ribosomal subunit protein uL11 (143 aa).

The protein belongs to the universal ribosomal protein uL11 family. As to quaternary structure, part of the ribosomal stalk of the 50S ribosomal subunit. Interacts with L10 and the large rRNA to form the base of the stalk. L10 forms an elongated spine to which L12 dimers bind in a sequential fashion forming a multimeric L10(L12)X complex. Post-translationally, one or more lysine residues are methylated.

Its function is as follows. Forms part of the ribosomal stalk which helps the ribosome interact with GTP-bound translation factors. The chain is Large ribosomal subunit protein uL11 from Albidiferax ferrireducens (strain ATCC BAA-621 / DSM 15236 / T118) (Rhodoferax ferrireducens).